We begin with the raw amino-acid sequence, 651 residues long: Chaperone protein HtpG (651 aa).

An a; substrate-binding region spans residues 1–353; it reads MAPHVEQLEF…AQDMSLNVSR (353 aa). The interval 354 to 569 is b; it reads EILQQDRQIR…TFGITPALAR (216 aa). The interval 570-651 is c; that stretch reads MYRASGQPVP…RLTRMVGEQS (82 aa).

It belongs to the heat shock protein 90 family. As to quaternary structure, homodimer.

It localises to the cytoplasm. In terms of biological role, molecular chaperone. Has ATPase activity. This Mycolicibacterium gilvum (strain PYR-GCK) (Mycobacterium gilvum (strain PYR-GCK)) protein is Chaperone protein HtpG.